The chain runs to 192 residues: Inosine triphosphate pyrophosphatase (192 aa).

11-16 (TGNKNK) is a binding site for ITP. E41 contributes to the Mg(2+) binding site. ITP contacts are provided by residues K53, 69–70 (DT), K86, 146–149 (FGWD), K169, and 174–175 (HR).

Belongs to the HAM1 NTPase family. In terms of assembly, homodimer. Requires Mg(2+) as cofactor. The cofactor is Mn(2+).

The protein resides in the cytoplasm. The catalysed reaction is ITP + H2O = IMP + diphosphate + H(+). The enzyme catalyses dITP + H2O = dIMP + diphosphate + H(+). It catalyses the reaction XTP + H2O = XMP + diphosphate + H(+). Its function is as follows. Pyrophosphatase that hydrolyzes non-canonical purine nucleotides such as inosine triphosphate (ITP), deoxyinosine triphosphate (dITP) or xanthosine 5'-triphosphate (XTP) to their respective monophosphate derivatives. The enzyme does not distinguish between the deoxy- and ribose forms. Probably excludes non-canonical purines from RNA and DNA precursor pools, thus preventing their incorporation into RNA and DNA and avoiding chromosomal lesions. The sequence is that of Inosine triphosphate pyrophosphatase from Ciona intestinalis (Transparent sea squirt).